The chain runs to 297 residues: tRNA pseudouridine synthase B (297 aa).

Aspartate 39 serves as the catalytic Nucleophile.

This sequence belongs to the pseudouridine synthase TruB family. Type 1 subfamily.

The enzyme catalyses uridine(55) in tRNA = pseudouridine(55) in tRNA. In terms of biological role, responsible for synthesis of pseudouridine from uracil-55 in the psi GC loop of transfer RNAs. In Lactobacillus gasseri (strain ATCC 33323 / DSM 20243 / BCRC 14619 / CIP 102991 / JCM 1131 / KCTC 3163 / NCIMB 11718 / NCTC 13722 / AM63), this protein is tRNA pseudouridine synthase B.